The following is a 379-amino-acid chain: MKIMRKNHPLLKIINHSFIDLPTPSNISSWWNFGSLLGACLIIQILTGLFLAMHYTSDTTTAFSSVAHICRDVNYGWLIRYLHANGASMFFICLSIHAGRGIYYGSYVLSETWNIGIILFLTTMATAFVGYVLPWGQMSFWGATVITNLLSAIPYIGSTLFEWIWGGFSVDKATLTRFFAFHFILPFIITAFVLVHLLFLHETGSNNPSGLNSNSDKIPFHPYYTIKDLLGVFLLLLALMILALFFPDVLGDPDNFTPANPLNTPAHIKPEWYFLFAYAILRSIPNKLGGVLALILSILILAAFPLLNVSKQHGLIFRPITQTIYWIFIANLLVLTWIGGQPVXYPFTMIGQIASITYFAIILILMPISNTIENNIIKL.

The next 4 helical transmembrane spans lie at Phe33–Met53, Trp77–Ala98, Trp113–Leu133, and Phe178–Leu198. 2 residues coordinate heme b: His83 and His97. Heme b-binding residues include His182 and His196. Residue His201 participates in a ubiquinone binding. 4 helical membrane passes run Ile226–Phe246, Leu288–Asn308, Ile320–Gly340, and Phe347–Pro367.

It belongs to the cytochrome b family. In terms of assembly, the cytochrome bc1 complex contains 11 subunits: 3 respiratory subunits (MT-CYB, CYC1 and UQCRFS1), 2 core proteins (UQCRC1 and UQCRC2) and 6 low-molecular weight proteins (UQCRH/QCR6, UQCRB/QCR7, UQCRQ/QCR8, UQCR10/QCR9, UQCR11/QCR10 and a cleavage product of UQCRFS1). This cytochrome bc1 complex then forms a dimer. The cofactor is heme b.

Its subcellular location is the mitochondrion inner membrane. In terms of biological role, component of the ubiquinol-cytochrome c reductase complex (complex III or cytochrome b-c1 complex) that is part of the mitochondrial respiratory chain. The b-c1 complex mediates electron transfer from ubiquinol to cytochrome c. Contributes to the generation of a proton gradient across the mitochondrial membrane that is then used for ATP synthesis. The polypeptide is Cytochrome b (MT-CYB) (Thaptomys nigrita (Blackish grass mouse)).